The chain runs to 733 residues: 1,4-alpha-glucan branching enzyme GlgB (733 aa).

Asp-409 functions as the Nucleophile in the catalytic mechanism. Catalysis depends on Glu-462, which acts as the Proton donor.

The protein belongs to the glycosyl hydrolase 13 family. GlgB subfamily. As to quaternary structure, monomer.

The catalysed reaction is Transfers a segment of a (1-&gt;4)-alpha-D-glucan chain to a primary hydroxy group in a similar glucan chain.. It participates in glycan biosynthesis; glycogen biosynthesis. Catalyzes the formation of the alpha-1,6-glucosidic linkages in glycogen by scission of a 1,4-alpha-linked oligosaccharide from growing alpha-1,4-glucan chains and the subsequent attachment of the oligosaccharide to the alpha-1,6 position. This chain is 1,4-alpha-glucan branching enzyme GlgB, found in Gloeobacter violaceus (strain ATCC 29082 / PCC 7421).